Reading from the N-terminus, the 456-residue chain is Bifunctional protein GlmU (456 aa).

Positions 1-230 (MDKRFAVILA…FQETLGVNDR (230 aa)) are pyrophosphorylase. Residues 9–12 (LAAG), lysine 23, glutamine 73, and 78–79 (GT) each bind UDP-N-acetyl-alpha-D-glucosamine. A Mg(2+)-binding site is contributed by aspartate 103. Positions 140, 155, 170, and 228 each coordinate UDP-N-acetyl-alpha-D-glucosamine. Asparagine 228 is a Mg(2+) binding site. The tract at residues 231–251 (VALSQAEMYMKERINKRHMQN) is linker. Positions 252–456 (GVTLIDPMNT…EDYVKNIHKK (205 aa)) are N-acetyltransferase. UDP-N-acetyl-alpha-D-glucosamine is bound by residues arginine 333 and lysine 351. The Proton acceptor role is filled by histidine 363. Residues tyrosine 366 and asparagine 377 each coordinate UDP-N-acetyl-alpha-D-glucosamine. Residues 386-387 (NY), alanine 423, and arginine 440 each bind acetyl-CoA.

This sequence in the N-terminal section; belongs to the N-acetylglucosamine-1-phosphate uridyltransferase family. The protein in the C-terminal section; belongs to the transferase hexapeptide repeat family. As to quaternary structure, homotrimer. Mg(2+) is required as a cofactor.

It localises to the cytoplasm. The enzyme catalyses alpha-D-glucosamine 1-phosphate + acetyl-CoA = N-acetyl-alpha-D-glucosamine 1-phosphate + CoA + H(+). The catalysed reaction is N-acetyl-alpha-D-glucosamine 1-phosphate + UTP + H(+) = UDP-N-acetyl-alpha-D-glucosamine + diphosphate. Its pathway is nucleotide-sugar biosynthesis; UDP-N-acetyl-alpha-D-glucosamine biosynthesis; N-acetyl-alpha-D-glucosamine 1-phosphate from alpha-D-glucosamine 6-phosphate (route II): step 2/2. It functions in the pathway nucleotide-sugar biosynthesis; UDP-N-acetyl-alpha-D-glucosamine biosynthesis; UDP-N-acetyl-alpha-D-glucosamine from N-acetyl-alpha-D-glucosamine 1-phosphate: step 1/1. It participates in bacterial outer membrane biogenesis; LPS lipid A biosynthesis. Functionally, catalyzes the last two sequential reactions in the de novo biosynthetic pathway for UDP-N-acetylglucosamine (UDP-GlcNAc). The C-terminal domain catalyzes the transfer of acetyl group from acetyl coenzyme A to glucosamine-1-phosphate (GlcN-1-P) to produce N-acetylglucosamine-1-phosphate (GlcNAc-1-P), which is converted into UDP-GlcNAc by the transfer of uridine 5-monophosphate (from uridine 5-triphosphate), a reaction catalyzed by the N-terminal domain. This chain is Bifunctional protein GlmU, found in Bacillus velezensis (strain DSM 23117 / BGSC 10A6 / LMG 26770 / FZB42) (Bacillus amyloliquefaciens subsp. plantarum).